We begin with the raw amino-acid sequence, 643 residues long: tRNA 5-methylaminomethyl-2-thiouridine biosynthesis bifunctional protein MnmC (643 aa).

Residues 1 to 223 form a tRNA (mnm(5)s(2)U34)-methyltransferase region; the sequence is MPDRLVSATL…VDDRLVGDYA (223 aa). Positions 247 to 643 are FAD-dependent cmnm(5)s(2)U34 oxidoreductase; it reads IGAGLAGCAV…LRARRVGSAG (397 aa).

This sequence in the N-terminal section; belongs to the methyltransferase superfamily. tRNA (mnm(5)s(2)U34)-methyltransferase family. The protein in the C-terminal section; belongs to the DAO family. The cofactor is FAD.

It localises to the cytoplasm. It carries out the reaction 5-aminomethyl-2-thiouridine(34) in tRNA + S-adenosyl-L-methionine = 5-methylaminomethyl-2-thiouridine(34) in tRNA + S-adenosyl-L-homocysteine + H(+). Catalyzes the last two steps in the biosynthesis of 5-methylaminomethyl-2-thiouridine (mnm(5)s(2)U) at the wobble position (U34) in tRNA. Catalyzes the FAD-dependent demodification of cmnm(5)s(2)U34 to nm(5)s(2)U34, followed by the transfer of a methyl group from S-adenosyl-L-methionine to nm(5)s(2)U34, to form mnm(5)s(2)U34. The protein is tRNA 5-methylaminomethyl-2-thiouridine biosynthesis bifunctional protein MnmC of Burkholderia orbicola (strain AU 1054).